Consider the following 122-residue polypeptide: Large ribosomal subunit protein uL14 (122 aa).

It belongs to the universal ribosomal protein uL14 family. Part of the 50S ribosomal subunit. Forms a cluster with proteins L3 and L19. In the 70S ribosome, L14 and L19 interact and together make contacts with the 16S rRNA in bridges B5 and B8.

Binds to 23S rRNA. Forms part of two intersubunit bridges in the 70S ribosome. This Rhodospirillum rubrum (strain ATCC 11170 / ATH 1.1.1 / DSM 467 / LMG 4362 / NCIMB 8255 / S1) protein is Large ribosomal subunit protein uL14.